The chain runs to 362 residues: uncharacterized protein (362 aa).

This is an uncharacterized protein from Caenorhabditis elegans.